The primary structure comprises 463 residues: Polyadenylate-binding protein-interacting protein 1 (463 aa).

A disordered region spans residues 1–86; sequence MSDGFERAPG…HKRTSPAAQL (86 aa). In terms of domain architecture, MIF4G spans 145–362; it reads TEYVQDFLNH…LKLVELRSSN (218 aa). The interval 420–442 is disordered; it reads RDYDENGTDGGDSYFEDDDDNEM. Residues 433–442 are compositionally biased toward acidic residues; sequence YFEDDDDNEM.

As to quaternary structure, interacts with the RRM1-RRM2 and C-terminal regions of epabp.

The protein resides in the cytoplasm. Acts as a coactivator in the regulation of translation initiation of poly(A)-containing mRNAs. This chain is Polyadenylate-binding protein-interacting protein 1, found in Xenopus laevis (African clawed frog).